Consider the following 353-residue polypeptide: UPF0283 membrane protein KPN78578_12740 (353 aa).

The next 3 membrane-spanning stretches (helical) occupy residues 70 to 90 (MVSAGLAIFGVSVVAQGVQWT), 99 to 119 (WIALGGCVAGALIVGAGVGSL), and 213 to 233 (ESTLMIAVSPLALVDMAFIAW).

This sequence belongs to the UPF0283 family.

The protein localises to the cell inner membrane. This chain is UPF0283 membrane protein KPN78578_12740, found in Klebsiella pneumoniae subsp. pneumoniae (strain ATCC 700721 / MGH 78578).